A 414-amino-acid chain; its full sequence is Multifunctional CCA protein (414 aa).

Positions 8 and 11 each coordinate ATP. CTP is bound by residues glycine 8 and arginine 11. 2 residues coordinate Mg(2+): aspartate 21 and aspartate 23. Arginine 91, arginine 137, and arginine 140 together coordinate ATP. CTP contacts are provided by arginine 91, arginine 137, and arginine 140. One can recognise an HD domain in the interval 228–329 (TGIHTLLTLA…LKLLDTIDVW (102 aa)).

This sequence belongs to the tRNA nucleotidyltransferase/poly(A) polymerase family. Bacterial CCA-adding enzyme type 1 subfamily. As to quaternary structure, monomer. Can also form homodimers and oligomers. The cofactor is Mg(2+). Ni(2+) serves as cofactor.

It catalyses the reaction a tRNA precursor + 2 CTP + ATP = a tRNA with a 3' CCA end + 3 diphosphate. It carries out the reaction a tRNA with a 3' CCA end + 2 CTP + ATP = a tRNA with a 3' CCACCA end + 3 diphosphate. Functionally, catalyzes the addition and repair of the essential 3'-terminal CCA sequence in tRNAs without using a nucleic acid template. Adds these three nucleotides in the order of C, C, and A to the tRNA nucleotide-73, using CTP and ATP as substrates and producing inorganic pyrophosphate. tRNA 3'-terminal CCA addition is required both for tRNA processing and repair. Also involved in tRNA surveillance by mediating tandem CCA addition to generate a CCACCA at the 3' terminus of unstable tRNAs. While stable tRNAs receive only 3'-terminal CCA, unstable tRNAs are marked with CCACCA and rapidly degraded. The sequence is that of Multifunctional CCA protein from Edwardsiella ictaluri (strain 93-146).